The following is a 442-amino-acid chain: GTPase Der (442 aa).

EngA-type G domains follow at residues 3–167 (PTIV…PPDV) and 177–350 (PRIA…AAAM). Residues 9-16 (GRPNVGKS), 56-60 (DTAGF), 119-122 (NKSE), 183-190 (GRPNVGKS), 230-234 (DTAGL), and 295-298 (NKWD) contribute to the GTP site. The region spanning 351 to 435 (VNLSTPRLTR…PLRIQFRTAH (85 aa)) is the KH-like domain.

Belongs to the TRAFAC class TrmE-Era-EngA-EngB-Septin-like GTPase superfamily. EngA (Der) GTPase family. Associates with the 50S ribosomal subunit.

Its function is as follows. GTPase that plays an essential role in the late steps of ribosome biogenesis. This is GTPase Der from Aromatoleum aromaticum (strain DSM 19018 / LMG 30748 / EbN1) (Azoarcus sp. (strain EbN1)).